The primary structure comprises 890 residues: uncharacterized protein (890 aa).

The signal sequence occupies residues 1 to 20 (MKILKSLVLLVLFMAMPAKA). The next 6 membrane-spanning stretches (helical) occupy residues 518-538 (AALT…ALKL), 567-587 (TYFF…VVGA), 613-633 (LLFI…IITI), 651-671 (VIAF…IILM), 684-704 (ISTL…FLLI), and 775-795 (FLVL…SYGL). The disordered stretch occupies residues 860–890 (KARKPEGGEHTNKFLAERNDVPKKEEGERKE). The segment covering 862–890 (RKPEGGEHTNKFLAERNDVPKKEEGERKE) has biased composition (basic and acidic residues).

This sequence belongs to the TrbL/VirB6 family.

The protein localises to the cell membrane. This is an uncharacterized protein from Rickettsia felis (strain ATCC VR-1525 / URRWXCal2) (Rickettsia azadi).